Here is a 290-residue protein sequence, read N- to C-terminus: Pyridoxal kinase PdxY (290 aa).

Substrate-binding positions include serine 12 and 47–48; that span reads TQ. ATP-binding positions include aspartate 114, glutamate 151, lysine 184, and 211–214; that span reads RPLL. Aspartate 225 contacts substrate.

Belongs to the pyridoxine kinase family. PdxY subfamily. In terms of assembly, homodimer. It depends on Mg(2+) as a cofactor.

The enzyme catalyses pyridoxal + ATP = pyridoxal 5'-phosphate + ADP + H(+). The protein operates within cofactor metabolism; pyridoxal 5'-phosphate salvage; pyridoxal 5'-phosphate from pyridoxal: step 1/1. Functionally, pyridoxal kinase involved in the salvage pathway of pyridoxal 5'-phosphate (PLP). Catalyzes the phosphorylation of pyridoxal to PLP. The polypeptide is Pyridoxal kinase PdxY (Pseudomonas fluorescens (strain ATCC BAA-477 / NRRL B-23932 / Pf-5)).